Here is a 249-residue protein sequence, read N- to C-terminus: Probable transcriptional regulatory protein Strop_1792 (249 aa).

It belongs to the TACO1 family.

The protein resides in the cytoplasm. The chain is Probable transcriptional regulatory protein Strop_1792 from Salinispora tropica (strain ATCC BAA-916 / DSM 44818 / JCM 13857 / NBRC 105044 / CNB-440).